The sequence spans 1203 residues: Delphilin (1203 aa).

One can recognise a PDZ 1 domain in the interval 1 to 79; sequence MPATNQGWPE…VPPSLGVLPG (79 aa). Alanine 3 carries the S-palmitoyl cysteine lipid modification. Residues 215-270 are disordered; it reads GAQRLRRSRSEERPERLLVSTRASAAPRRPDEPPPRKATSLLGGRTGPGGPRRTVR. A compositionally biased stretch (low complexity) spans 231–241; the sequence is LLVSTRASAAP. The 78-residue stretch at 268 to 345 folds into the PDZ 2 domain; it reads TVRVYKGNKS…MPTLVVEEGP (78 aa). Serine 303 is modified (phosphoserine). Disordered regions lie at residues 466 to 541, 563 to 586, 611 to 656, and 710 to 821; these read ESSL…TPNP, IGTM…GPRT, LASP…PPSR, and SFVT…SHMS. A compositionally biased stretch (polar residues) spans 500–509; it reads RSQGLETSLS. Residues serine 572, serine 613, serine 644, and serine 647 each carry the phosphoserine modification. A compositionally biased stretch (low complexity) spans 611 to 625; sequence LASPSSSESHPYASL. Low complexity predominate over residues 715 to 740; that stretch reads ERSSASECVSSSEEGSSLTYSSISDH. Pro residues predominate over residues 741–756; that stretch reads IPPPPLSPPPPPPLPF. The span at 774–784 shows a compositional bias: polar residues; the sequence is QSLTKPLTQIN. Residues 786–803 are compositionally biased toward pro residues; sequence PVPPPPPPPLPPPVPCAP. The 392-residue stretch at 812–1203 folds into the FH2 domain; that stretch reads HRRSETSHMS…SSGMVSPLAW (392 aa).

As to quaternary structure, interacts with C-terminus of the glutamate receptor GRID2 via PDZ domain. Isoform 2 also interacts with Profilin-2/PFN2 and with the monocarboxylate transporter SLC16A7 via PDZ domain. The interaction of isoform 2 with GRID2 is dependent on GRID2 phosphorylation by PKA. Isoform 2 is palmitoylated. Palmitoylation of isoform 2 is necessary for the enhanced cell surface expression of GRID2, and is also responsible for the accumulation of isoform 2 within dendritic spines. Isoform 1 and isoform 2 are differentially localized, probably modulating GRID2 signaling in neurons. As to expression, isoform 1 is expressed in the cerebellum, but not in the cerebral cortex. Isoform 2 is expressed in the cell body of purkinge cells of the cerebellum and weakly expressed in the cerebrum and the brainstem as well as various nuclei of the thalamus. Isoform 2 is highly expressed in the cerebral cortex than in the cerebellum. Isoform 3 is expressed in the cerebellum and cerebrum.

The protein localises to the postsynaptic cell membrane. It is found in the cell projection. It localises to the dendritic spine. Its subcellular location is the synapse. The protein resides in the cell membrane. Its function is as follows. Postsynaptic scaffolding protein at the Purkinje cell synapse, where it may serve to link GRID2 with actin cytoskeleton and various signaling molecules. The protein is Delphilin (Grid2ip) of Mus musculus (Mouse).